A 157-amino-acid polypeptide reads, in one-letter code: Transcriptional repressor NrdR (157 aa).

The segment at 3 to 34 is a zinc-finger region; it reads CPSCQNTDSRVLESRSADAGKCVRRRRECLNC. The ATP-cone domain occupies 49–139; the sequence is VTVIKRSNAK…VYRQFNGIED (91 aa).

This sequence belongs to the NrdR family. Zn(2+) serves as cofactor.

In terms of biological role, negatively regulates transcription of bacterial ribonucleotide reductase nrd genes and operons by binding to NrdR-boxes. In Prochlorococcus marinus (strain SARG / CCMP1375 / SS120), this protein is Transcriptional repressor NrdR.